Consider the following 155-residue polypeptide: Small ribosomal subunit protein uS7 (155 aa).

The protein belongs to the universal ribosomal protein uS7 family. As to quaternary structure, part of the 30S ribosomal subunit. Contacts proteins S9 and S11.

In terms of biological role, one of the primary rRNA binding proteins, it binds directly to 16S rRNA where it nucleates assembly of the head domain of the 30S subunit. Is located at the subunit interface close to the decoding center, probably blocks exit of the E-site tRNA. The protein is Small ribosomal subunit protein uS7 of Pseudothermotoga lettingae (strain ATCC BAA-301 / DSM 14385 / NBRC 107922 / TMO) (Thermotoga lettingae).